Here is a 192-residue protein sequence, read N- to C-terminus: Phosphoheptose isomerase (192 aa).

In terms of domain architecture, SIS spans 37-192 (LADSFKAGGK…IQLIEKEMAK (156 aa)). 52 to 54 (NGG) provides a ligand contact to substrate. Zn(2+) is bound by residues His-61 and Glu-65. Residues Glu-65, 93 to 94 (ND), 119 to 121 (STS), Ser-124, and Gln-172 each bind substrate. 2 residues coordinate Zn(2+): Gln-172 and His-180.

Belongs to the SIS family. GmhA subfamily. In terms of assembly, homotetramer. Zn(2+) serves as cofactor.

Its subcellular location is the cytoplasm. It carries out the reaction 2 D-sedoheptulose 7-phosphate = D-glycero-alpha-D-manno-heptose 7-phosphate + D-glycero-beta-D-manno-heptose 7-phosphate. Its pathway is carbohydrate biosynthesis; D-glycero-D-manno-heptose 7-phosphate biosynthesis; D-glycero-alpha-D-manno-heptose 7-phosphate and D-glycero-beta-D-manno-heptose 7-phosphate from sedoheptulose 7-phosphate: step 1/1. In terms of biological role, catalyzes the isomerization of sedoheptulose 7-phosphate in D-glycero-D-manno-heptose 7-phosphate. The sequence is that of Phosphoheptose isomerase from Escherichia fergusonii (strain ATCC 35469 / DSM 13698 / CCUG 18766 / IAM 14443 / JCM 21226 / LMG 7866 / NBRC 102419 / NCTC 12128 / CDC 0568-73).